The chain runs to 368 residues: Galactoside 2-alpha-L-fucosyltransferase Sec1 (368 aa).

Over 1–20 (MPSDSCLLSLTVLQRLRAIC) the chain is Cytoplasmic. Residues 21–41 (PPLSTFYLFFVIFVVSTIFHC) form a helical; Signal-anchor for type II membrane protein membrane-spanning segment. The Lumenal segment spans residues 42–368 (HRRLGLVPAP…APKRHWGALL (327 aa)). N-linked (GlcNAc...) asparagine glycosylation is found at N195, N289, and N315.

Belongs to the glycosyltransferase 11 family.

The protein resides in the golgi apparatus. The protein localises to the golgi stack membrane. It catalyses the reaction a ganglioside GM1 + GDP-beta-L-fucose = a ganglioside Fuc-GM1 + GDP + H(+). It functions in the pathway protein modification; protein glycosylation. Functionally, catalyzes the transfer of alpha 1,2-linked fucose to ganglioside GM1 and galacto-N-biose. In Mus musculus (Mouse), this protein is Galactoside 2-alpha-L-fucosyltransferase Sec1.